A 492-amino-acid polypeptide reads, in one-letter code: Glutamyl-tRNA(Gln) amidotransferase subunit B, mitochondrial (492 aa).

The protein belongs to the GatB/GatE family. GatB subfamily. Subunit of the heterotrimeric GatFAB amidotransferase (AdT) complex, composed of A, B and F subunits.

It is found in the mitochondrion. It carries out the reaction L-glutamyl-tRNA(Gln) + L-glutamine + ATP + H2O = L-glutaminyl-tRNA(Gln) + L-glutamate + ADP + phosphate + H(+). Its function is as follows. Allows the formation of correctly charged Gln-tRNA(Gln) through the transamidation of misacylated Glu-tRNA(Gln) in the mitochondria. The reaction takes place in the presence of glutamine and ATP through an activated gamma-phospho-Glu-tRNA(Gln). This chain is Glutamyl-tRNA(Gln) amidotransferase subunit B, mitochondrial, found in Komagataella phaffii (strain GS115 / ATCC 20864) (Yeast).